We begin with the raw amino-acid sequence, 101 residues long: MLSLAHYLVLGAILFAISIVGIFLNRRNVIIILMAIELMLLAVNTNFVAFSHYLGDVHGQIFVFFVLTVAAAEAAIGLAILVTLFRSLDTINVEDLDQLKG.

Transmembrane regions (helical) follow at residues 4-24, 30-50, and 61-81; these read LAHYLVLGAILFAISIVGIFL, IIILMAIELMLLAVNTNFVAF, and IFVFFVLTVAAAEAAIGLAIL.

It belongs to the complex I subunit 4L family. In terms of assembly, NDH-1 is composed of 14 different subunits. Subunits NuoA, H, J, K, L, M, N constitute the membrane sector of the complex.

Its subcellular location is the cell inner membrane. It catalyses the reaction a quinone + NADH + 5 H(+)(in) = a quinol + NAD(+) + 4 H(+)(out). Its function is as follows. NDH-1 shuttles electrons from NADH, via FMN and iron-sulfur (Fe-S) centers, to quinones in the respiratory chain. The immediate electron acceptor for the enzyme in this species is believed to be ubiquinone. Couples the redox reaction to proton translocation (for every two electrons transferred, four hydrogen ions are translocated across the cytoplasmic membrane), and thus conserves the redox energy in a proton gradient. This is NADH-quinone oxidoreductase subunit K from Paraburkholderia phymatum (strain DSM 17167 / CIP 108236 / LMG 21445 / STM815) (Burkholderia phymatum).